We begin with the raw amino-acid sequence, 485 residues long: Protein adenylyltransferase Fic (485 aa).

Residues 21–43 (YRFVLFFIAGSLAAFAFHALTSS) form a helical membrane-spanning segment. TPR repeat units lie at residues 107 to 140 (AMGA…APKH) and 141 to 175 (PEVL…SPSN). Residues 232 to 237 (SVGIEG) carry the Inhibitory (S/T)XXXE(G/N) motif motif. ATP is bound by residues glutamate 236 and 317–320 (VGGH). Positions 286 to 421 (ITLKDILELH…IRPFVRFIAD (136 aa)) constitute a Fido domain. The active site involves histidine 364. Residues 368–375 (DGNGRTSR), 400–401 (YY), and asparagine 408 contribute to the ATP site.

This sequence belongs to the fic family. Homodimer.

It is found in the membrane. It catalyses the reaction L-tyrosyl-[protein] + ATP = O-(5'-adenylyl)-L-tyrosyl-[protein] + diphosphate. The enzyme catalyses L-threonyl-[protein] + ATP = 3-O-(5'-adenylyl)-L-threonyl-[protein] + diphosphate. It carries out the reaction 3-O-(5'-adenylyl)-L-threonyl-[protein] + H2O = L-threonyl-[protein] + AMP + H(+). With respect to regulation, the side chain of Glu-236 determines which of the two opposing activities (AMPylase or de-AMPylase) will take place. In response to endoplasmic reticulum stress, mediates de-AMPylase activity. Adenylyltransferase activity is inhibited by the inhibitory helix present at the N-terminus: Glu-236 binds ATP and competes with ATP-binding at Arg-375, thereby preventing adenylyltransferase activity. In unstressed cells, disengagement of Glu-236 promotes adenylyltransferase activity. Activation dissociates ATP-binding from Glu-236, allowing ordered binding of the entire ATP moiety with the alpha-phosphate in an orientation that is productive for accepting an incoming target hydroxyl side chain. Functionally, protein that can both mediate the addition of adenosine 5'-monophosphate (AMP) to specific residues of target proteins (AMPylation), and the removal of the same modification from target proteins (de-AMPylation), depending on the context. The side chain of Glu-236 determines which of the two opposing activities (AMPylase or de-AMPylase) will take place. Acts as a key regulator of the unfolded protein response (UPR) by mediating AMPylation or de-AMPylation of Hsc70-3/BiP. In unstressed cells, acts as an adenylyltransferase by mediating AMPylation of Hsc70-3/BiP at 'Thr-518', thereby inactivating it. In response to endoplasmic reticulum stress, acts as a phosphodiesterase by mediating removal of ATP (de-AMPylation) from Hsc70-3/BiP at 'Thr-518', leading to restore HSPA5/BiP activity. In Drosophila virilis (Fruit fly), this protein is Protein adenylyltransferase Fic.